Reading from the N-terminus, the 203-residue chain is Small ribosomal subunit protein uS5 (203 aa).

Positions 49–112 (FEERVVKIKR…KNANNNLIKV (64 aa)) constitute an S5 DRBM domain.

It belongs to the universal ribosomal protein uS5 family. Part of the 30S ribosomal subunit. Contacts proteins S4 and S8.

Its function is as follows. With S4 and S12 plays an important role in translational accuracy. In terms of biological role, located at the back of the 30S subunit body where it stabilizes the conformation of the head with respect to the body. The protein is Small ribosomal subunit protein uS5 of Ureaplasma parvum serovar 3 (strain ATCC 700970).